Reading from the N-terminus, the 153-residue chain is 6,7-dimethyl-8-ribityllumazine synthase (153 aa).

Residues Phe21, 55 to 57, and 79 to 81 each bind 5-amino-6-(D-ribitylamino)uracil; these read AFE and TVI. A (2S)-2-hydroxy-3-oxobutyl phosphate-binding site is contributed by 84–85; that stretch reads AT. His87 acts as the Proton donor in catalysis. Phe112 provides a ligand contact to 5-amino-6-(D-ribitylamino)uracil. Residue Arg126 participates in (2S)-2-hydroxy-3-oxobutyl phosphate binding.

This sequence belongs to the DMRL synthase family. In terms of assembly, forms an icosahedral capsid composed of 60 subunits, arranged as a dodecamer of pentamers.

The catalysed reaction is (2S)-2-hydroxy-3-oxobutyl phosphate + 5-amino-6-(D-ribitylamino)uracil = 6,7-dimethyl-8-(1-D-ribityl)lumazine + phosphate + 2 H2O + H(+). It participates in cofactor biosynthesis; riboflavin biosynthesis; riboflavin from 2-hydroxy-3-oxobutyl phosphate and 5-amino-6-(D-ribitylamino)uracil: step 1/2. In terms of biological role, catalyzes the formation of 6,7-dimethyl-8-ribityllumazine by condensation of 5-amino-6-(D-ribitylamino)uracil with 3,4-dihydroxy-2-butanone 4-phosphate. This is the penultimate step in the biosynthesis of riboflavin. This chain is 6,7-dimethyl-8-ribityllumazine synthase, found in Bacillus cereus (strain AH187).